Here is a 337-residue protein sequence, read N- to C-terminus: 2-oxoglutarate receptor 1 (337 aa).

Residues 1–38 (MIEPLDSPASDSDFLDYPSALGNCTDEQISFKMQYLPV) lie on the Extracellular side of the membrane. N-linked (GlcNAc...) asparagine glycosylation occurs at asparagine 23. Residues 39–59 (IYSIIFLVGFPGNTVAISIYI) form a helical membrane-spanning segment. Over 60–69 (FKMRPWRGST) the chain is Cytoplasmic. A helical membrane pass occupies residues 70–90 (VIMLNLALTDLLYLTSLPFLI). Topologically, residues 91 to 116 (HYYASGENWIFGDFMCKFIRFGFHFN) are extracellular. Cysteine 106 and cysteine 183 are disulfide-bonded. A helical transmembrane segment spans residues 117 to 137 (LYSSILFLTCFSLFRYVVIIH). At 138 to 151 (PMSCFSIQKTRWAV) the chain is on the cytoplasmic side. A helical transmembrane segment spans residues 152–172 (VACAGVWVISLVAVMPMTFLI). The Extracellular portion of the chain corresponds to 173–200 (TSTTRTNRSACLDLTSSDDLTTIKWYNL). Residues 201 to 221 (ILTATTFCLPLVIVTLCYTTI) traverse the membrane as a helical segment. At 222-242 (ISTLTHGPRTHSCFKQKARRL) the chain is on the cytoplasmic side. Residues 243–263 (TILLLLVFYICFLPFHILRVI) traverse the membrane as a helical segment. Residues 264 to 284 (RIESRLLSISCSIESHIHEAY) lie on the Extracellular side of the membrane. A helical transmembrane segment spans residues 285-305 (IVSRPLAALNTFGNLLLYVVV). The Cytoplasmic portion of the chain corresponds to 306 to 337 (SNNFQQAFCSIVRCKASGDLEQGKKDSCSNNP).

It belongs to the G-protein coupled receptor 1 family. Predominantly expressed in the kidney with limited expression in the testis and the smooth muscle. Expressed in SLC26A4/pendrin-positive type B and non-A non-B intercalated cells (at protein level).

It is found in the cell membrane. In terms of biological role, g protein-coupled receptor for dicarboxylates and amino dicarboxylates. Receptor for itaconate produced by activated macrophages upon bacterial infection. In the respiratory epithelium, couples the binding of itaconate to the activation of GNA11 and downstream intracellular Ca(2+) release, leading to mucocilliary clearance of airborne pathogens. Receptor for leukotriene E4 (LTE4) produced by mast cells upon allergic inflammation. Binds with high affinity to LTE4 and elicits mucin release from pulmonary epithelium in response to airborne fungi allergens. Regulates mucin-producing goblet cell homeostasis. Receptor for alpha-ketoglutarate produced by proximal tubule renal cells upon metabolic alkalosis. In an intrarenal paracrine signaling pathway, binds alpha-ketoglutarate and drives transepithelial salt reabsorption and bicarbonate secretion by SLC26A4/pendrin-positive intercalated cells. The polypeptide is 2-oxoglutarate receptor 1 (Oxgr1) (Mus musculus (Mouse)).